Reading from the N-terminus, the 283-residue chain is Putative transcription factor kapC (283 aa).

Residues 1–10 (MQPTLAPAPH) show a composition bias toward pro residues. The tract at residues 1 to 121 (MQPTLAPAPH…NRAAQRAFRQ (121 aa)) is disordered. Positions 26–42 (HDQLLAAHQHLSHPQQA) are enriched in low complexity. Over residues 55–67 (QPNTTSPRDQNNI) the composition is skewed to polar residues. A bZIP domain is found at 102-165 (PLSTSKRAAQ…EYIINLQSRL (64 aa)). The tract at residues 103-126 (LSTSKRAAQNRAAQRAFRQRKESY) is basic motif. Residues 108 to 118 (RAAQNRAAQRA) are compositionally biased toward low complexity. Residues 130 to 161 (LEEQVKEFDNTNETMKQLQAENYQLREYIINL) are leucine-zipper. Residues 178 to 283 (NIDLNQPRND…EPGHGLPVVS (106 aa)) are disordered.

The protein belongs to the bZIP family.

Its subcellular location is the nucleus. In terms of biological role, putative transcription factor. The polypeptide is Putative transcription factor kapC (kapC) (Aspergillus niger (strain ATCC MYA-4892 / CBS 513.88 / FGSC A1513)).